Consider the following 524-residue polypeptide: Alkaline phosphatase, tissue-nonspecific isozyme (524 aa).

The first 17 residues, 1–17, serve as a signal peptide directing secretion; the sequence is MILPFLVLAIGTCLTNS. Residue Asp60 coordinates Mg(2+). The Zn(2+) site is built by Asp60 and Ser110. The Phosphoserine intermediate role is filled by Ser110. At Ser110 the chain carries Phosphoserine. A disulfide bridge links Cys139 with Cys201. N-linked (GlcNAc...) asparagine glycosylation occurs at Asn140. Thr173 serves as a coordination point for Mg(2+). Asn230 carries an N-linked (GlcNAc...) asparagine glycan. Glu235 contributes to the Ca(2+) binding site. The N-linked (GlcNAc...) asparagine glycan is linked to Asn271. Ca(2+)-binding residues include Phe290 and Glu291. Asn303 carries N-linked (GlcNAc...) asparagine glycosylation. Residue Asp306 coordinates Ca(2+). Glu332 contributes to the Mg(2+) binding site. The Zn(2+) site is built by Asp337, His341, Asp378, and His379. An N-linked (GlcNAc...) asparagine glycan is attached at Asn430. His454 contacts Zn(2+). Cys489 and Cys497 are disulfide-bonded. Ser501 is lipidated: GPI-anchor amidated serine. The propeptide at 502–524 is removed in mature form; it reads SASSPSPGALLLPLALFPLRTLF.

Belongs to the alkaline phosphatase family. In terms of assembly, homodimer. The cofactor is Mg(2+). Requires Zn(2+) as cofactor. Ca(2+) serves as cofactor. Post-translationally, N-glycosylated.

The protein resides in the cell membrane. It localises to the extracellular vesicle membrane. Its subcellular location is the mitochondrion membrane. It is found in the mitochondrion intermembrane space. The enzyme catalyses a phosphate monoester + H2O = an alcohol + phosphate. It catalyses the reaction diphosphate + H2O = 2 phosphate + H(+). The catalysed reaction is pyridoxal 5'-phosphate + H2O = pyridoxal + phosphate. It carries out the reaction phosphoethanolamine + H2O = ethanolamine + phosphate. The enzyme catalyses N-phosphocreatine + H2O = creatine + phosphate. It catalyses the reaction ATP + H2O = ADP + phosphate + H(+). The catalysed reaction is ADP + H2O = AMP + phosphate + H(+). It carries out the reaction AMP + H2O = adenosine + phosphate. With respect to regulation, phosphatase activity is specifically inhibited by 5-((5-chloro-2-methoxyphenyl)sulfonamido)nicotinamide (SBI-425). Functionally, alkaline phosphatase that metabolizes various phosphate compounds and plays a key role in skeletal mineralization and adaptive thermogenesis. Has broad substrate specificity and can hydrolyze a considerable variety of compounds: however, only a few substrates, such as diphosphate (inorganic pyrophosphate; PPi), pyridoxal 5'-phosphate (PLP) and N-phosphocreatine are natural substrates. Plays an essential role in skeletal and dental mineralization via its ability to hydrolyze extracellular diphosphate, a potent mineralization inhibitor, to phosphate: it thereby promotes hydroxyapatite crystal formation and increases inorganic phosphate concentration. Acts in a non-redundant manner with PHOSPHO1 in skeletal mineralization: while PHOSPHO1 mediates the initiation of hydroxyapatite crystallization in the matrix vesicles (MVs), ALPL/TNAP catalyzes the spread of hydroxyapatite crystallization in the extracellular matrix. Also promotes dephosphorylation of osteopontin (SSP1), an inhibitor of hydroxyapatite crystallization in its phosphorylated state; it is however unclear whether ALPL/TNAP mediates SSP1 dephosphorylation via a direct or indirect manner. Catalyzes dephosphorylation of PLP to pyridoxal (PL), the transportable form of vitamin B6, in order to provide a sufficient amount of PLP in the brain, an essential cofactor for enzymes catalyzing the synthesis of diverse neurotransmitters. Additionally, also able to mediate ATP degradation in a stepwise manner to adenosine, thereby regulating the availability of ligands for purinergic receptors. Also capable of dephosphorylating microbial products, such as lipopolysaccharides (LPS) as well as other phosphorylated small-molecules, such as poly-inosine:cytosine (poly I:C). Acts as a key regulator of adaptive thermogenesis as part of the futile creatine cycle: localizes to the mitochondria of thermogenic fat cells and acts by mediating hydrolysis of N-phosphocreatine to initiate a futile cycle of creatine dephosphorylation and phosphorylation. During the futile creatine cycle, creatine and N-phosphocreatine are in a futile cycle, which dissipates the high energy charge of N-phosphocreatine as heat without performing any mechanical or chemical work. This Rattus norvegicus (Rat) protein is Alkaline phosphatase, tissue-nonspecific isozyme (Alpl).